Reading from the N-terminus, the 182-residue chain is Protein GrpE (182 aa).

Positions 1–17 (MEEKKRCEESEKIKEQE) are enriched in basic and acidic residues. The interval 1 to 33 (MEEKKRCEESEKIKEQENETLPNEDSPSMGKKV) is disordered.

This sequence belongs to the GrpE family. In terms of assembly, homodimer.

It is found in the cytoplasm. Functionally, participates actively in the response to hyperosmotic and heat shock by preventing the aggregation of stress-denatured proteins, in association with DnaK and GrpE. It is the nucleotide exchange factor for DnaK and may function as a thermosensor. Unfolded proteins bind initially to DnaJ; upon interaction with the DnaJ-bound protein, DnaK hydrolyzes its bound ATP, resulting in the formation of a stable complex. GrpE releases ADP from DnaK; ATP binding to DnaK triggers the release of the substrate protein, thus completing the reaction cycle. Several rounds of ATP-dependent interactions between DnaJ, DnaK and GrpE are required for fully efficient folding. The sequence is that of Protein GrpE from Borrelia hermsii (strain HS1 / DAH).